The primary structure comprises 436 residues: Antilisterial bacteriocin subtilosin biosynthesis protein AlbD (436 aa).

10 consecutive transmembrane segments (helical) span residues 27-47 (IAAG…QAGI), 55-75 (TYII…SVTS), 113-133 (LFFF…GAQT), 134-154 (LFWL…GVVL), 164-184 (LMFL…ALMP), 187-207 (TIPL…PVFL), 240-260 (AMLL…FQMM), 270-290 (IYIV…LYSI), 315-335 (FYSG…GFIS), and 395-415 (AILA…LVIV).

The protein localises to the cell membrane. Functionally, involved in the production of the bacteriocin subtilosin. Required for immunity to subtilosin. This chain is Antilisterial bacteriocin subtilosin biosynthesis protein AlbD (albD), found in Bacillus subtilis (strain 168).